We begin with the raw amino-acid sequence, 299 residues long: Oxygen-dependent coproporphyrinogen-III oxidase (299 aa).

S92 is a binding site for substrate. Mn(2+) is bound by residues H96 and H106. H106 serves as the catalytic Proton donor. Position 108 to 110 (108 to 110) interacts with substrate; the sequence is NVR. 2 residues coordinate Mn(2+): H145 and H175. An important for dimerization region spans residues 240–275; sequence YVEFNLVWDRGTLFGLQTGGRTESILMSMPPLVRWE. 258-260 contacts substrate; sequence GGR.

It belongs to the aerobic coproporphyrinogen-III oxidase family. In terms of assembly, homodimer. The cofactor is Mn(2+).

Its subcellular location is the cytoplasm. The enzyme catalyses coproporphyrinogen III + O2 + 2 H(+) = protoporphyrinogen IX + 2 CO2 + 2 H2O. Its pathway is porphyrin-containing compound metabolism; protoporphyrin-IX biosynthesis; protoporphyrinogen-IX from coproporphyrinogen-III (O2 route): step 1/1. Functionally, involved in the heme biosynthesis. Catalyzes the aerobic oxidative decarboxylation of propionate groups of rings A and B of coproporphyrinogen-III to yield the vinyl groups in protoporphyrinogen-IX. In Escherichia coli (strain K12 / MC4100 / BW2952), this protein is Oxygen-dependent coproporphyrinogen-III oxidase.